The following is a 765-amino-acid chain: MASHIVGYPRMGPKRELKFALESFWDGKSTAEDLKKVSADLRSSIWKQMADAGIKYIPSNTFSYYDQVLDTTAMLGAVPPRYGWTGGEIEFDVYFSMARGNASVPAMEMTKWFDTNYHFIVPELGPEVNFSYASHKAVLEYKEAKALGVDTVPVLVGPVSYLLLSKQAKGVDKSFDLLSLLPKILPIYKEVVAELKEAGASWIQFDEPLLVMDLESHKLQAFSAAYADLESTLSGLNVVVETYFADVTAEAYKTLISLKGVTGYGFDLVRGTKTLDLVKAEFPSGKYLFAGVVDGRNIWANDLAASLATLEALEGVVGKDKLVVSTSCSFLHTAVDLINETKLDDEIKSWLAFAAQKVLEVNALAKALSGQKDEAFFSANAAALASRKSSPRVTNEAVQKAATALKGSDHRRATTVSSRLDAQQKKLNLPILPTTTIGSFPQTVELRRVRREYKAKKISEEEYVKAIKEEISKVVKLQEELDIDVLVHGEPERNDMVEYFGEQLSGFAFSANGWVQSYGSRCVKPPIIYGDVSRPNPMTVFWSSMAQSMTARPMKGMLTGPVTILNWSFVRNDQPRHETCYQIALAIKNEVEDLEKAGINVIQIDEAALREGLPLRKSEHDFYLKWAVHSFRITNVGVQDTTQIHTHMCYSNFNDIIHSIIDMDADVITIENSRSDEKLLSVFREGVKYGAGIGPGVYDIHSPRIPPTEELADRIRKMLAVLESNVLWVNPDCGLKTRKYGEVNPALSNMVAAAKQLRQELASAK.

5-methyltetrahydropteroyltri-L-glutamate is bound by residues Lys18 and Asn116. L-homocysteine-binding positions include 437-439 (IGS) and Glu490. Residues 437–439 (IGS) and Glu490 contribute to the L-methionine site. 5-methyltetrahydropteroyltri-L-glutamate-binding positions include Asp495, Tyr518, 521-522 (RC), and Trp567. L-homocysteine is bound at residue Asp605. Asp605 is a binding site for L-methionine. Zn(2+)-binding residues include His647, Cys649, His658, Asp662, and Glu671. His701 functions as the Proton donor in the catalytic mechanism. Cys733 contributes to the Zn(2+) binding site.

It belongs to the vitamin-B12 independent methionine synthase family. It depends on Zn(2+) as a cofactor.

The protein localises to the cytoplasm. The catalysed reaction is 5-methyltetrahydropteroyltri-L-glutamate + L-homocysteine = tetrahydropteroyltri-L-glutamate + L-methionine. It functions in the pathway amino-acid biosynthesis; L-methionine biosynthesis via de novo pathway; L-methionine from L-homocysteine (MetE route): step 1/1. Functionally, catalyzes the transfer of a methyl group from 5-methyltetrahydrofolate to homocysteine resulting in methionine formation. In Mesembryanthemum crystallinum (Common ice plant), this protein is 5-methyltetrahydropteroyltriglutamate--homocysteine methyltransferase (METE).